Here is a 185-residue protein sequence, read N- to C-terminus: Calcium-binding protein K-like (185 aa).

EF-hand domains follow at residues 60–95 (WDEASMVRMFKLFDSDGNGVIDVKEFITALYMMTRA) and 96–131 (PTTDKLGFLFDLFDSDKSGYLEAGEIEKLVNIVVVC). Positions 73, 75, 77, 84, 109, 111, 113, 115, and 120 each coordinate Ca(2+).

This sequence belongs to the recoverin family.

The polypeptide is Calcium-binding protein K-like (Dictyostelium discoideum (Social amoeba)).